We begin with the raw amino-acid sequence, 341 residues long: MMSRYEELRKELPAQPKVWLITGVAGFIGSNLLETLLKLDQKVVGLDNFATGHQRNLDEVRSLVSEKQWSNFKFIQGDIRNLDDCNNACAGVDYVLHQAALGSVPRSINDPITSNATNIDGFLNMLIAARDAKVQSFTYAASSSTYGDHPGLPKVEDTIGKPLSPYAVTKYVNELYADVFSRCYGFSTIGLRYFNVFGRRQDPNGAYAAVIPKWTSSMIQGDDVYINGDGETSRDFCYIENTVQANLLAATAGLDARNQVYNIAVGGRTSLNQLFFALRDGLAENGVSYHREPVYRDFREGDVRHSLADISKAAKLLGYAPKYDVSAGVALAMPWYIMFLK.

Phenylalanine 27, isoleucine 28, aspartate 47, alanine 50, threonine 51, glycine 52, aspartate 78, isoleucine 79, and glutamine 98 together coordinate NAD(+). Serine 103 contacts UDP-N-acetyl-alpha-D-galactosamine. Threonine 117 provides a ligand contact to NAD(+). The UDP-N-acetyl-alpha-D-galactosamine site is built by serine 142, serine 143, and tyrosine 166. 2 residues coordinate NAD(+): tyrosine 166 and lysine 170. Catalysis depends on tyrosine 166, which acts as the Proton acceptor. Asparagine 195 provides a ligand contact to UDP-N-acetyl-alpha-D-galactosamine. NAD(+) is bound at residue valine 196. Residues valine 210, tyrosine 225, asparagine 227, arginine 234, arginine 299, and aspartate 302 each contribute to the UDP-N-acetyl-alpha-D-galactosamine site.

This sequence belongs to the NAD(P)-dependent epimerase/dehydratase family. In terms of assembly, homodimer. The cofactor is NAD(+).

The catalysed reaction is UDP-2-acetamido-2-deoxy-alpha-D-glucuronate = UDP-2-acetamido-2-deoxy-alpha-D-galacturonate. It catalyses the reaction UDP-N-acetyl-alpha-D-glucosamine = UDP-N-acetyl-alpha-D-galactosamine. It participates in bacterial outer membrane biogenesis; LPS O-antigen biosynthesis. Functionally, epimerase required for the biosynthesis of the B-band O antigen of serotype O6 lipopolysaccharide. Catalyzes the reversible epimerization of UDP-N-acetylglucosaminuronic acid (UDP-GlcNAcA) to UDP-N-acetylgalactosaminuronic acid (UDP-GalNAcA). Also catalyzes the reversible epimerization of UDP-N-acetylglucosamine (UDP-GlcNAc) to UDP-N-acetylgalactosamine (UDP-GalNAc). Has very low epimerase activity with UDP-glucose (UDP-Glc) and UDP-galactose (UDP-Gal). This chain is UDP-N-acetyl-alpha-D-glucosaminouronate 4-epimerase, found in Pseudomonas aeruginosa.